The chain runs to 101 residues: Replication restart protein PriB (101 aa).

In terms of domain architecture, SSB spans 1–101; it reads MTTNNLVLSG…IHAENVELKT (101 aa).

This sequence belongs to the PriB family. Homodimer. Interacts with PriA and DnaT. Component of the replication restart primosome. Primosome assembly occurs via a 'hand-off' mechanism. PriA binds to replication forks, subsequently PriB then DnaT bind; DnaT then displaces ssDNA to generate the helicase loading substrate.

Its function is as follows. Involved in the restart of stalled replication forks, which reloads the replicative helicase on sites other than the origin of replication; the PriA-PriB pathway is the major replication restart pathway. During primosome assembly it facilitates complex formation between PriA and DnaT on DNA; stabilizes PriA on DNA. Stimulates the DNA unwinding activity of PriA helicase. The sequence is that of Replication restart protein PriB from Shewanella oneidensis (strain ATCC 700550 / JCM 31522 / CIP 106686 / LMG 19005 / NCIMB 14063 / MR-1).